The following is a 320-amino-acid chain: MQYAKISGTGSYLPANRVSNDDLAQKVDTSDEWITARTGIKFRHIAAENEKTSDLAAEAARRALADAKLNINDIDLIIVATATPDMQFPSTATIVQQKLGITNGCPAFDVQAVCAGFMYALTTANAYIKSGMAKNALVIGAETFSRIVDWNDRTTCVLFGDGAGAVVLSASDKPGIIHSKLKADGNYLKLLNVPGQIACGKVSGSPYISMDGPGVFKFAVKMLSKIADDVIEEAGYTAEQIDWIVPHQANRRIIESTAKHLGLSMDKVVLTVQDHGNTSAASIPLALDAGIRSGQIKRGQNLLLEGIGGGFAWGAVLLQY.

Active-site residues include Cys114 and His247. The interval 248–252 is ACP-binding; that stretch reads QANRR. Residue Asn277 is part of the active site.

It belongs to the thiolase-like superfamily. FabH family. Homodimer.

It localises to the cytoplasm. The enzyme catalyses malonyl-[ACP] + acetyl-CoA + H(+) = 3-oxobutanoyl-[ACP] + CO2 + CoA. It participates in lipid metabolism; fatty acid biosynthesis. Functionally, catalyzes the condensation reaction of fatty acid synthesis by the addition to an acyl acceptor of two carbons from malonyl-ACP. Catalyzes the first condensation reaction which initiates fatty acid synthesis and may therefore play a role in governing the total rate of fatty acid production. Possesses both acetoacetyl-ACP synthase and acetyl transacylase activities. Its substrate specificity determines the biosynthesis of branched-chain and/or straight-chain of fatty acids. In Neisseria gonorrhoeae (strain ATCC 700825 / FA 1090), this protein is Beta-ketoacyl-[acyl-carrier-protein] synthase III.